The chain runs to 159 residues: Adult-specific rigid cuticular protein 15.7 (159 aa).

The 67-residue stretch at 23–89 (LGNYAFNYGI…SIKTNEPGTA (67 aa)) folds into the Chitin-binding type R&amp;R domain.

In terms of biological role, component of the rigid cuticle of the spider. The chain is Adult-specific rigid cuticular protein 15.7 from Araneus diadematus (European garden spider).